The chain runs to 166 residues: Large ribosomal subunit protein uL10 (166 aa).

The protein belongs to the universal ribosomal protein uL10 family. As to quaternary structure, part of the ribosomal stalk of the 50S ribosomal subunit. The N-terminus interacts with L11 and the large rRNA to form the base of the stalk. The C-terminus forms an elongated spine to which L12 dimers bind in a sequential fashion forming a multimeric L10(L12)X complex.

Functionally, forms part of the ribosomal stalk, playing a central role in the interaction of the ribosome with GTP-bound translation factors. The sequence is that of Large ribosomal subunit protein uL10 from Phytoplasma australiense.